The primary structure comprises 432 residues: Adenylosuccinate synthetase (432 aa).

Residues 13–19 (GDEGKGK) and 41–43 (GHT) each bind GTP. D14 functions as the Proton acceptor in the catalytic mechanism. 2 residues coordinate Mg(2+): D14 and G41. IMP-binding positions include 14–17 (DEGK), 39–42 (NAGH), T130, R144, Q225, T240, and R304. The active-site Proton donor is the H42. Substrate is bound at residue 300–306 (ATTGRRR). GTP contacts are provided by residues R306, 332 to 334 (KLD), and 415 to 417 (STG).

Belongs to the adenylosuccinate synthetase family. In terms of assembly, homodimer. Requires Mg(2+) as cofactor.

It is found in the cytoplasm. The catalysed reaction is IMP + L-aspartate + GTP = N(6)-(1,2-dicarboxyethyl)-AMP + GDP + phosphate + 2 H(+). Its pathway is purine metabolism; AMP biosynthesis via de novo pathway; AMP from IMP: step 1/2. Functionally, plays an important role in the de novo pathway of purine nucleotide biosynthesis. Catalyzes the first committed step in the biosynthesis of AMP from IMP. The protein is Adenylosuccinate synthetase of Escherichia coli (strain K12).